Here is a 621-residue protein sequence, read N- to C-terminus: Very-long-chain aldehyde decarbonylase GL1-5 (621 aa).

Transmembrane regions (helical) follow at residues 99–119, 126–146, 186–206, 224–244, and 332–352; these read IILS…GQHL, GAGL…YWFH, LLFS…IIAF, FELV…LMYT, and MWPL…SFTV. One can recognise a Fatty acid hydroxylase domain in the interval 138–272; that stretch reads VEFLYYWFHR…MPFYDYIYNT (135 aa).

It belongs to the sterol desaturase family. Homodimer. In terms of tissue distribution, expressed in panicles, developing spikelets, stamens and hulls and, at low levels, in roots, developing seeds, flag leaves and seedling shoots. Strongly expressed in the epidermal cells of anthers.

It is found in the endoplasmic reticulum membrane. The catalysed reaction is a long-chain fatty aldehyde + 2 NADPH + O2 + H(+) = a long-chain alkane + formate + 2 NADP(+) + H2O. Its function is as follows. Aldehyde decarbonylase involved in the conversion of aldehydes to alkanes. Core component of a very-long-chain alkane synthesis complex. Required for the biosynthesis of very-long-chain fatty acids (including polyesters) in cuticles, anther tapetum and pollen exine. This chain is Very-long-chain aldehyde decarbonylase GL1-5, found in Oryza sativa subsp. japonica (Rice).